The following is a 372-amino-acid chain: Glutamate 5-kinase (372 aa).

Residue K14 participates in ATP binding. S54, D141, and N153 together coordinate substrate. 173–174 lines the ATP pocket; that stretch reads TD. Residues 280-358 enclose the PUA domain; sequence RGTLVLDAGA…DAIESLLGYS (79 aa).

This sequence belongs to the glutamate 5-kinase family.

It localises to the cytoplasm. It catalyses the reaction L-glutamate + ATP = L-glutamyl 5-phosphate + ADP. Its pathway is amino-acid biosynthesis; L-proline biosynthesis; L-glutamate 5-semialdehyde from L-glutamate: step 1/2. Its function is as follows. Catalyzes the transfer of a phosphate group to glutamate to form L-glutamate 5-phosphate. In Pseudomonas putida (strain W619), this protein is Glutamate 5-kinase.